The chain runs to 224 residues: TBP-related factor (224 aa).

The segment at 14-34 is disordered; that stretch reads RDNVAATSNAAANPHAALQPQ. Residues 17 to 34 are compositionally biased toward low complexity; sequence VAATSNAAANPHAALQPQ. Repeat copies occupy residues 51–127 and 141–218.

The protein belongs to the TBP family. Primary spermatocytes in the adult testis and in a subset of cells in the dorsal medial region of the embryonic CNS.

Its subcellular location is the nucleus. Acts as a transcription factor. Binds to the TATA box promoter element which lies close to the position of transcription initiation. In terms of biological role, may be essential for embryonic development. This is TBP-related factor (Trf) from Drosophila melanogaster (Fruit fly).